Consider the following 203-residue polypeptide: uncharacterized protein (203 aa).

The interval 1 to 23 (MGSSFVIDRSSSSPAPPRGPAPK) is disordered.

This is an uncharacterized protein from Saccharomyces cerevisiae (strain ATCC 204508 / S288c) (Baker's yeast).